Here is a 218-residue protein sequence, read N- to C-terminus: N-(5'-phosphoribosyl)anthranilate isomerase (218 aa).

This sequence belongs to the TrpF family.

The catalysed reaction is N-(5-phospho-beta-D-ribosyl)anthranilate = 1-(2-carboxyphenylamino)-1-deoxy-D-ribulose 5-phosphate. The protein operates within amino-acid biosynthesis; L-tryptophan biosynthesis; L-tryptophan from chorismate: step 3/5. The sequence is that of N-(5'-phosphoribosyl)anthranilate isomerase from Lachnoclostridium phytofermentans (strain ATCC 700394 / DSM 18823 / ISDg) (Clostridium phytofermentans).